Reading from the N-terminus, the 102-residue chain is Small ribosomal subunit protein uS10 (102 aa).

It belongs to the universal ribosomal protein uS10 family. In terms of assembly, part of the 30S ribosomal subunit.

Its function is as follows. Involved in the binding of tRNA to the ribosomes. This Streptococcus pneumoniae (strain Taiwan19F-14) protein is Small ribosomal subunit protein uS10.